The chain runs to 530 residues: Cytochrome P450 monooxygenase ausG (530 aa).

Residues 31-51 (LLVAYRLPGLLLLFSITIILF) form a helical membrane-spanning segment. C470 is a binding site for heme.

It belongs to the cytochrome P450 family. It depends on heme as a cofactor.

The protein resides in the membrane. The protein operates within secondary metabolite biosynthesis; terpenoid biosynthesis. Functionally, cytochrome P450 monooxygenase; part of the gene cluster B that mediates the biosynthesis of the fungal meroterpenoid acetoxydehydroaustin. The first step of the pathway is the synthesis of 3,5-dimethylorsellinic acid by the polyketide synthase ausA. 3,5-dimethylorsellinic acid is then prenylated by the polyprenyl transferase ausN. Further epoxidation by the FAD-dependent monooxygenase ausM and cyclization by the probable terpene cyclase ausL lead to the formation of protoaustinoid A. Protoaustinoid A is then oxidized to spiro-lactone preaustinoid A3 by the combined action of the FAD-binding monooxygenases ausB and ausC, and the dioxygenase ausE. Acid-catalyzed keto-rearrangement and ring contraction of the tetraketide portion of preaustinoid A3 by ausJ lead to the formation of preaustinoid A4. The aldo-keto reductase ausK, with the help of ausH, is involved in the next step by transforming preaustinoid A4 into isoaustinone which is in turn hydroxylated by the P450 monooxygenase ausI to form austinolide. The cytochrome P450 monooxygenase ausG then modifies austinolide to austinol. Austinol is further acetylated to austin by the O-acetyltransferase ausP, which spontaneously changes to dehydroaustin. The cytochrome P450 monooxygenase then converts dehydroaustin is into 7-dehydrodehydroaustin. The hydroxylation catalyzed by ausR permits the second O-acetyltransferase ausQ to add an additional acetyl group to the molecule, leading to the formation of acetoxydehydroaustin. Due to genetic rearrangements of the clusters and the subsequent loss of some enzymes, the end product of the Penicillium brasilianum austinoid biosynthesis clusters is acetoxydehydroaustin. The sequence is that of Cytochrome P450 monooxygenase ausG from Penicillium brasilianum.